The primary structure comprises 198 residues: MAKILVLYYSMYGHIETMAHAVAEGAKKVDGAEVIIKRVPETMPPEIFAKAGGKTQNAPVATPQELADYDAIIFGTPTRFGNMSGQMRTFLDQTGGLWASGALYGKLGGVFSSTGTGGGQEQTITSTWTTLAHHGMVIVPIGYSAQELFDVSQVRGGTPYGATTIAGGDGSRQPSQEELSIARYQGEYVAGLAVKLNG.

The Flavodoxin-like domain occupies 4–189; it reads ILVLYYSMYG…SIARYQGEYV (186 aa). Residues 10–15 and 78–80 contribute to the FMN site; these read SMYGHI and TRF. Tyr-12 contributes to the NAD(+) binding site. A substrate-binding site is contributed by Trp-98. FMN is bound by residues 113 to 118 and His-133; that span reads STGTGG.

The protein belongs to the WrbA family. The cofactor is FMN.

It catalyses the reaction a quinone + NADH + H(+) = a quinol + NAD(+). The enzyme catalyses a quinone + NADPH + H(+) = a quinol + NADP(+). This is NAD(P)H dehydrogenase (quinone) from Salmonella typhi.